The following is a 217-amino-acid chain: MKPLSPLTLSFFLFVFITNLSLAFSNEDVEQVLDFNGNPIFPGVQYFILPAIRGPAGGGVRLGRTGDLTCPVTVLQDRQEVKNGLPVKFVIPEISPGIIFTGTPIEIEYTKKPNCAKSSKWLVFVDNVIQKACVGIGGPENYPGVQTLSGLFKIEKHESGFGYKLGFCVKGSPTCLDVGRFDNDEDGRRLNLTEHESFQVVFIQAEANDAEFIKSVV.

Residues 1–26 form the signal peptide; that stretch reads MKPLSPLTLSFFLFVFITNLSLAFSN. 2 cysteine pairs are disulfide-bonded: C70–C115 and C168–C175. N-linked (GlcNAc...) asparagine glycosylation is present at N191.

It belongs to the protease inhibitor I3 (leguminous Kunitz-type inhibitor) family. As to expression, expressed in roots, leaves, epidermal layers of elongating stems, meristems and in the vascular system.

The protein resides in the secreted. Might act as a protease inhibitor involved in plant defense responses. This is Kunitz-type trypsin inhibitor-like 1 protein (PIP20-1) from Pisum sativum (Garden pea).